Here is a 984-residue protein sequence, read N- to C-terminus: Probable beta-galactosidase C (984 aa).

Positions 1–23 (MRLLSFIYLVWLALLTGTPQVSA) are cleaved as a signal peptide. Substrate is bound by residues Y82, N127, A128, E129, and N187. E188 (proton donor) is an active-site residue. The N-linked (GlcNAc...) asparagine glycan is linked to N197. Y251 provides a ligand contact to substrate. C257 and C304 form a disulfide bridge. N276 carries N-linked (GlcNAc...) asparagine glycosylation. The active-site Nucleophile is E287. Y353 serves as a coordination point for substrate. N-linked (GlcNAc...) asparagine glycans are attached at residues N391, N421, N434, N517, N602, N677, N715, N720, N759, and N805.

It belongs to the glycosyl hydrolase 35 family.

The protein resides in the secreted. The enzyme catalyses Hydrolysis of terminal non-reducing beta-D-galactose residues in beta-D-galactosides.. Functionally, cleaves beta-linked terminal galactosyl residues from gangliosides, glycoproteins, and glycosaminoglycans. The sequence is that of Probable beta-galactosidase C (lacC) from Aspergillus flavus (strain ATCC 200026 / FGSC A1120 / IAM 13836 / NRRL 3357 / JCM 12722 / SRRC 167).